We begin with the raw amino-acid sequence, 284 residues long: Lipoyl synthase (284 aa).

7 residues coordinate [4Fe-4S] cluster: Cys-38, Cys-43, Cys-49, Cys-64, Cys-68, Cys-71, and Ser-277. Positions Trp-50–Ser-266 constitute a Radical SAM core domain.

It belongs to the radical SAM superfamily. Lipoyl synthase family. Requires [4Fe-4S] cluster as cofactor.

It is found in the cytoplasm. The enzyme catalyses [[Fe-S] cluster scaffold protein carrying a second [4Fe-4S](2+) cluster] + N(6)-octanoyl-L-lysyl-[protein] + 2 oxidized [2Fe-2S]-[ferredoxin] + 2 S-adenosyl-L-methionine + 4 H(+) = [[Fe-S] cluster scaffold protein] + N(6)-[(R)-dihydrolipoyl]-L-lysyl-[protein] + 4 Fe(3+) + 2 hydrogen sulfide + 2 5'-deoxyadenosine + 2 L-methionine + 2 reduced [2Fe-2S]-[ferredoxin]. It participates in protein modification; protein lipoylation via endogenous pathway; protein N(6)-(lipoyl)lysine from octanoyl-[acyl-carrier-protein]: step 2/2. Functionally, catalyzes the radical-mediated insertion of two sulfur atoms into the C-6 and C-8 positions of the octanoyl moiety bound to the lipoyl domains of lipoate-dependent enzymes, thereby converting the octanoylated domains into lipoylated derivatives. This is Lipoyl synthase from Chlorobium phaeovibrioides (strain DSM 265 / 1930) (Prosthecochloris vibrioformis (strain DSM 265)).